The primary structure comprises 419 residues: L-rhamnose isomerase (419 aa).

Residues His262, Asp294, and Asp296 each coordinate Mn(2+).

The protein belongs to the rhamnose isomerase family. Homotetramer. The cofactor is Mn(2+).

Its subcellular location is the cytoplasm. It carries out the reaction L-rhamnopyranose = L-rhamnulose. Its pathway is carbohydrate degradation; L-rhamnose degradation; glycerone phosphate from L-rhamnose: step 1/3. Its function is as follows. Catalyzes the interconversion of L-rhamnose and L-rhamnulose. This Enterobacter sp. (strain 638) protein is L-rhamnose isomerase.